The primary structure comprises 49 residues: Light-harvesting protein B-880 alpha chain (49 aa).

Residues 1 to 12 lie on the Cytoplasmic side of the membrane; sequence MYKLWLLFDPRR. The chain crosses the membrane as a helical span at residues 13–33; the sequence is TLVALSAFLFVLGLIIHFISL. Residue His-29 participates in a bacteriochlorophyll binding. The Periplasmic portion of the chain corresponds to 34-49; it reads STDRFNWLEGKPAVRA.

It belongs to the antenna complex alpha subunit family. As to quaternary structure, the core complex is formed by different alpha and beta chains, binding bacteriochlorophyll molecules, and arranged most probably in tetrameric structures disposed around the reaction center. The non-pigmented gamma chains may constitute additional components.

The protein resides in the cell inner membrane. Its function is as follows. Antenna complexes are light-harvesting systems, which transfer the excitation energy to the reaction centers. The protein is Light-harvesting protein B-880 alpha chain of Rhodoblastus acidophilus (Rhodopseudomonas acidophila).